The sequence spans 601 residues: Glutathione-regulated potassium-efflux system protein KefB (601 aa).

The next 13 membrane-spanning stretches (helical) occupy residues 4 to 24 (SDFL…VPLA), 29 to 49 (IGAV…GLGF), 55 to 75 (EILH…GLEL), 87 to 107 (IFGV…GLLM), 115 to 135 (AAVV…LQLM), 152 to 172 (VLLF…LLAG), 177 to 197 (HFDW…LIGG), 207 to 227 (FIAA…LVLG), 230 to 250 (LFMD…GVLL), 268 to 288 (GLLL…GVLY), 291 to 311 (LLWV…VLYL), 324 to 344 (MQFA…FSTA), and 356 to 376 (ALLL…MKLV). The RCK N-terminal domain maps to 400 to 519 (KPQVIVVGFG…AGVTQFSRET (120 aa)).

The protein belongs to the monovalent cation:proton antiporter 2 (CPA2) transporter (TC 2.A.37) family. KefB subfamily. As to quaternary structure, interacts with the regulatory subunit KefG.

The protein localises to the cell inner membrane. Activated by adducts between glutathione and electrophiles. In terms of biological role, pore-forming subunit of a potassium efflux system that confers protection against electrophiles. Catalyzes K(+)/H(+) antiport. This is Glutathione-regulated potassium-efflux system protein KefB from Escherichia coli (strain K12).